The primary structure comprises 122 residues: Large ribosomal subunit protein uL14 (122 aa).

The protein belongs to the universal ribosomal protein uL14 family. As to quaternary structure, part of the 50S ribosomal subunit. Forms a cluster with proteins L3 and L19. In the 70S ribosome, L14 and L19 interact and together make contacts with the 16S rRNA in bridges B5 and B8.

Functionally, binds to 23S rRNA. Forms part of two intersubunit bridges in the 70S ribosome. The chain is Large ribosomal subunit protein uL14 from Thermosipho melanesiensis (strain DSM 12029 / CIP 104789 / BI429).